The primary structure comprises 171 residues: MEKANSFTKEQLIACGQGELLGANSPKLPIDNMLMVDRIVRINEDGGAFGKGEIIAELDINPTLWFFDCHFKGDPVMPGCLGLDAMWQLVGFYLGWEGAQGKGRALGVGEVKFTGQVLPDAKKVTYKLNIKRKIHRKLVMGIADATMEVDGREIYSATDLKVGIFSDTSTF.

H70 is a catalytic residue.

It belongs to the thioester dehydratase family. FabA subfamily. Homodimer.

The protein resides in the cytoplasm. The catalysed reaction is a (3R)-hydroxyacyl-[ACP] = a (2E)-enoyl-[ACP] + H2O. The enzyme catalyses (3R)-hydroxydecanoyl-[ACP] = (2E)-decenoyl-[ACP] + H2O. It catalyses the reaction (2E)-decenoyl-[ACP] = (3Z)-decenoyl-[ACP]. It functions in the pathway lipid metabolism; fatty acid biosynthesis. Necessary for the introduction of cis unsaturation into fatty acids. Catalyzes the dehydration of (3R)-3-hydroxydecanoyl-ACP to E-(2)-decenoyl-ACP and then its isomerization to Z-(3)-decenoyl-ACP. Can catalyze the dehydratase reaction for beta-hydroxyacyl-ACPs with saturated chain lengths up to 16:0, being most active on intermediate chain length. The chain is 3-hydroxydecanoyl-[acyl-carrier-protein] dehydratase from Shewanella denitrificans (strain OS217 / ATCC BAA-1090 / DSM 15013).